Consider the following 164-residue polypeptide: Small ribosomal subunit protein uS5 (164 aa).

Residues 10-73 (LEERVVAINR…EAAKKNMIEV (64 aa)) enclose the S5 DRBM domain.

This sequence belongs to the universal ribosomal protein uS5 family. Part of the 30S ribosomal subunit. Contacts proteins S4 and S8.

With S4 and S12 plays an important role in translational accuracy. Its function is as follows. Located at the back of the 30S subunit body where it stabilizes the conformation of the head with respect to the body. The chain is Small ribosomal subunit protein uS5 from Streptococcus pyogenes serotype M1.